Consider the following 184-residue polypeptide: Endothelial cell-specific molecule 1 (184 aa).

The first 21 residues, 1 to 21, serve as a signal peptide directing secretion; sequence MKSLLLLTTLLIPLHLGMAWS. Positions 24-102 constitute an IGFBP N-terminal domain; sequence YAVDCPEHCD…GDEFGVCKDC (79 aa). 6 cysteine pairs are disulfide-bonded: Cys-28–Cys-51, Cys-32–Cys-53, Cys-37–Cys-54, Cys-43–Cys-57, Cys-65–Cys-83, and Cys-77–Cys-99. The segment at 145–184 is disordered; it reads RTSASQTERDAASGDGNAVREEIGDRNAARPSVMKWLNPR. A compositionally biased stretch (basic and acidic residues) spans 151–172; it reads TERDAASGDGNAVREEIGDRNA. Ser-157 carries O-linked (Xyl...) (chondroitin sulfate) serine glycosylation.

O-glycosylated; contains chondroitin sulfate and dermatan sulfate. In terms of tissue distribution, pineal gland specific.

It localises to the secreted. Functionally, involved in angiogenesis; promotes angiogenic sprouting. May have potent implications in lung endothelial cell-leukocyte interactions. The protein is Endothelial cell-specific molecule 1 (Esm1) of Rattus norvegicus (Rat).